Here is a 413-residue protein sequence, read N- to C-terminus: Phosphopentomutase (413 aa).

Residues Asp11, Asp306, His311, Asp347, His348, and His359 each contribute to the Mn(2+) site.

This sequence belongs to the phosphopentomutase family. The cofactor is Mn(2+).

Its subcellular location is the cytoplasm. It carries out the reaction 2-deoxy-alpha-D-ribose 1-phosphate = 2-deoxy-D-ribose 5-phosphate. The catalysed reaction is alpha-D-ribose 1-phosphate = D-ribose 5-phosphate. It functions in the pathway carbohydrate degradation; 2-deoxy-D-ribose 1-phosphate degradation; D-glyceraldehyde 3-phosphate and acetaldehyde from 2-deoxy-alpha-D-ribose 1-phosphate: step 1/2. Isomerase that catalyzes the conversion of deoxy-ribose 1-phosphate (dRib-1-P) and ribose 1-phosphate (Rib-1-P) to deoxy-ribose 5-phosphate (dRib-5-P) and ribose 5-phosphate (Rib-5-P), respectively. The sequence is that of Phosphopentomutase from Helicobacter pylori (strain ATCC 700392 / 26695) (Campylobacter pylori).